The sequence spans 354 residues: Guanine nucleotide-binding protein G(o) subunit alpha (354 aa).

Gly-2 carries the N-myristoyl glycine lipid modification. Cys-3 carries S-palmitoyl cysteine lipidation. The 323-residue stretch at 32 to 354 (KDVKLLLLGA…ANNLRGCGLY (323 aa)) folds into the G-alpha domain. Positions 35–48 (KLLLLGAGESGKST) are G1 motif. GTP is bound by residues Glu-43, Lys-46, Ser-47, Thr-48, Ser-152, Leu-176, Arg-177, Thr-178, and Arg-179. Ser-47 serves as a coordination point for Mg(2+). The tract at residues 174–182 (DILRTRVKT) is G2 motif. Thr-182 is a binding site for Mg(2+). The interval 197–206 (FRLFDVGGQR) is G3 motif. Gln-205 carries the 5-glutamyl histamine modification. Positions 266–273 (ILFLNKKD) are G4 motif. GTP contacts are provided by Asn-270, Asp-273, and Cys-325. Positions 324 to 329 (TCATDT) are G5 motif. The S-palmitoyl cysteine moiety is linked to residue Cys-351.

This sequence belongs to the G-alpha family. G(i/o/t/z) subfamily. In terms of assembly, g proteins are composed of 3 units; alpha, beta and gamma. The alpha chain contains the guanine nucleotide binding site. Forms a complex with GNB1 and GNG3. Interacts with RGS14. Interacts with RGS16. Interacts with RGS19. Interacts (when palmitoylated) with ADGRG3. In terms of processing, histaminylated at Gln-205 residues by TGM2.

The protein localises to the cell membrane. It is found in the membrane. The enzyme catalyses GTP + H2O = GDP + phosphate + H(+). With respect to regulation, the GTPase activity is promoted by GTPAse activators, such as RGS14, RGS16 and RGS19. Guanine nucleotide-binding proteins (G proteins) function as transducers downstream of G protein-coupled receptors (GPCRs) in numerous signaling cascades. The alpha chain contains the guanine nucleotide binding site and alternates between an active, GTP-bound state and an inactive, GDP-bound state. Signaling by an activated GPCR promotes GDP release and GTP binding. The alpha subunit has a low GTPase activity that converts bound GTP to GDP, thereby terminating the signal. Both GDP release and GTP hydrolysis are modulated by numerous regulatory proteins. Signaling is mediated via effector proteins, such as adenylate cyclase. Inhibits adenylate cyclase activity, leading to decreased intracellular cAMP levels. The chain is Guanine nucleotide-binding protein G(o) subunit alpha (Gnao1) from Mus musculus (Mouse).